The following is a 335-amino-acid chain: Ketol-acid reductoisomerase (NADP(+)) (335 aa).

Positions 2–182 (AKIIYDNETT…GATRAGVYET (181 aa)) constitute a KARI N-terminal Rossmann domain. NADP(+)-binding positions include 25 to 28 (YGSQ), R48, S51, S53, and 83 to 86 (DENQ). Residue H108 is part of the active site. NADP(+) is bound at residue G134. Residues 183–328 (TFREETETDL…KQIRANIPWL (146 aa)) enclose the KARI C-terminal knotted domain. Positions 191, 195, 227, and 231 each coordinate Mg(2+). Residue S252 participates in substrate binding.

This sequence belongs to the ketol-acid reductoisomerase family. Mg(2+) serves as cofactor.

The enzyme catalyses (2R)-2,3-dihydroxy-3-methylbutanoate + NADP(+) = (2S)-2-acetolactate + NADPH + H(+). The catalysed reaction is (2R,3R)-2,3-dihydroxy-3-methylpentanoate + NADP(+) = (S)-2-ethyl-2-hydroxy-3-oxobutanoate + NADPH + H(+). It participates in amino-acid biosynthesis; L-isoleucine biosynthesis; L-isoleucine from 2-oxobutanoate: step 2/4. The protein operates within amino-acid biosynthesis; L-valine biosynthesis; L-valine from pyruvate: step 2/4. Involved in the biosynthesis of branched-chain amino acids (BCAA). Catalyzes an alkyl-migration followed by a ketol-acid reduction of (S)-2-acetolactate (S2AL) to yield (R)-2,3-dihydroxy-isovalerate. In the isomerase reaction, S2AL is rearranged via a Mg-dependent methyl migration to produce 3-hydroxy-3-methyl-2-ketobutyrate (HMKB). In the reductase reaction, this 2-ketoacid undergoes a metal-dependent reduction by NADPH to yield (R)-2,3-dihydroxy-isovalerate. The polypeptide is Ketol-acid reductoisomerase (NADP(+)) (Methanosarcina barkeri (strain Fusaro / DSM 804)).